The following is a 121-amino-acid chain: uncharacterized protein (121 aa).

The Cupin type-2 domain maps to 47 to 101 (SEVPHYHAEHDLTFTVLKGKGELYLEGEKKKLKEGDWAFIPKGAVHFYRNTSELS).

This is an uncharacterized protein from Aquifex aeolicus (strain VF5).